A 275-amino-acid chain; its full sequence is Elongation factor Ts (275 aa).

Positions 76-79 (TDFV) are involved in Mg(2+) ion dislocation from EF-Tu.

The protein belongs to the EF-Ts family.

It localises to the cytoplasm. Its function is as follows. Associates with the EF-Tu.GDP complex and induces the exchange of GDP to GTP. It remains bound to the aminoacyl-tRNA.EF-Tu.GTP complex up to the GTP hydrolysis stage on the ribosome. This chain is Elongation factor Ts, found in Nocardia farcinica (strain IFM 10152).